The sequence spans 578 residues: MLKRLDKIRFRGQKRDDFLDLVESPNASDTECGDEIPMKIPPTSLKDTEELKDPAGSGTIIMASGVAEYNRTESDRLNEVKGHLEIALLEKHFLQEELRKLREETNIDTLKQELEKERQRRTELEQKITDIAKTRTDESATQQLSKGPSQTNGADKQRSKTMCYRVQKWFYDKFGEYIEDFRFQPEECTVETEEPLSARRLTENMRRLKRGAKPVTNFVKNLSALSDWHSVYTSAIAFIIYMNAVWHGWAIPMFLFLAILRLSLNYLIARGWRIQWSIVPQVSETLELPKEDLTVSEKFQLVLDVAQKAQNLFGKMADILEKIKNLFMWVQPEMTQKLYIGLWAAFVASCFFHYKTIGLCMGLYAGIKFFLIDFIFKRCPRLRAKYDTPYIIWTSLPTDPQLKERTNATSSRRIQTVYSRGNLASSAPQGVSRDEETGRFHSTKKSSFHEIFSLLETERPLPACETGWRCCLINRDRKMPTDYIRNGILYVTENFLCFESSRSGSSKRNKVIKLTDITDIQKYKVLSVLPGSGMGIAVSTPSTQKPLVFGAMVHRDEAFETIFSQYVKITSAVTNSDT.

The stretch at 83–135 (HLEIALLEKHFLQEELRKLREETNIDTLKQELEKERQRRTELEQKITDIAKTR) forms a coiled coil. Residues 132–157 (AKTRTDESATQQLSKGPSQTNGADKQ) are disordered. A compositionally biased stretch (polar residues) spans 139–154 (SATQQLSKGPSQTNGA). 3 helical membrane-spanning segments follow: residues 236-256 (IAFIIYMNAVWHGWAIPMFLF), 334-354 (MTQKLYIGLWAAFVASCFFHY), and 356-376 (TIGLCMGLYAGIKFFLIDFIF). The 79-residue stretch at 446–524 (SSFHEIFSLL…TDITDIQKYK (79 aa)) folds into the GRAM domain.

Its subcellular location is the mitochondrion membrane. It localises to the endoplasmic reticulum membrane. Functionally, plays a role as a mediator of e2f1-induced apoptosis in the absence of p53/TP53. The polypeptide is GRAM domain-containing protein 4 (gramd4) (Xenopus laevis (African clawed frog)).